Consider the following 596-residue polypeptide: Uptake hydrogenase large subunit (596 aa).

The Ni(2+) site is built by C75, C78, C575, and C578.

The protein belongs to the [NiFe]/[NiFeSe] hydrogenase large subunit family. As to quaternary structure, heterodimer of a large and a small subunit. Ni(2+) is required as a cofactor.

It is found in the cell membrane. It carries out the reaction H2 + A = AH2. In terms of biological role, this enzyme recycles the H(2) produced by nitrogenase to increase the production of ATP and to protect nitrogenase against inhibition or damage by O(2) under carbon- or phosphate-limited conditions. The chain is Uptake hydrogenase large subunit (hupB) from Rhizobium leguminosarum bv. viciae.